The primary structure comprises 258 residues: Probable parvulin-type peptidyl-prolyl cis-trans isomerase (258 aa).

An N-terminal signal peptide occupies residues 1–19; sequence MKRIAMLAAACVIAVPAFA. The PpiC domain occupies 127–219; it reads KMEYKVRHIL…FGWHVIQVDD (93 aa). Over residues 158–175 the composition is skewed to basic and acidic residues; sequence DDLAKKNSKDPGSAERGG. Positions 158–178 are disordered; that stretch reads DDLAKKNSKDPGSAERGGDLG.

Belongs to the PpiC/parvulin rotamase family.

The enzyme catalyses [protein]-peptidylproline (omega=180) = [protein]-peptidylproline (omega=0). This chain is Probable parvulin-type peptidyl-prolyl cis-trans isomerase, found in Bordetella bronchiseptica (strain ATCC BAA-588 / NCTC 13252 / RB50) (Alcaligenes bronchisepticus).